The chain runs to 173 residues: Thiol-disulfide oxidoreductase ResA (173 aa).

The helical; Signal-anchor for type II membrane protein transmembrane segment at 10-29 threads the bilayer; the sequence is VIILLILCGAVGFTLYQGYF. Residues 35–173 enclose the Thioredoxin domain; it reads MEIGKEAPNF…LEEYLKKITP (139 aa). A disulfide bond links Cys73 and Cys76.

Belongs to the thioredoxin family. ResA subfamily.

The protein localises to the cell membrane. The protein operates within protein modification; cytochrome c assembly. Its function is as follows. Thiol-disulfide oxidoreductase which is required in disulfide reduction during c-type cytochrome synthesis. May accept reducing equivalents from CcdA, leading to breakage of disulfide bonds in apocytochrome c; following this reduction heme can be covalently attached. The protein is Thiol-disulfide oxidoreductase ResA of Bacillus thuringiensis subsp. konkukian (strain 97-27).